The following is a 564-amino-acid chain: Proline--tRNA ligase (564 aa).

This sequence belongs to the class-II aminoacyl-tRNA synthetase family. ProS type 1 subfamily. In terms of assembly, homodimer.

The protein resides in the cytoplasm. The catalysed reaction is tRNA(Pro) + L-proline + ATP = L-prolyl-tRNA(Pro) + AMP + diphosphate. Its function is as follows. Catalyzes the attachment of proline to tRNA(Pro) in a two-step reaction: proline is first activated by ATP to form Pro-AMP and then transferred to the acceptor end of tRNA(Pro). As ProRS can inadvertently accommodate and process non-cognate amino acids such as alanine and cysteine, to avoid such errors it has two additional distinct editing activities against alanine. One activity is designated as 'pretransfer' editing and involves the tRNA(Pro)-independent hydrolysis of activated Ala-AMP. The other activity is designated 'posttransfer' editing and involves deacylation of mischarged Ala-tRNA(Pro). The misacylated Cys-tRNA(Pro) is not edited by ProRS. In Coxiella burnetii (strain Dugway 5J108-111), this protein is Proline--tRNA ligase.